Here is a 278-residue protein sequence, read N- to C-terminus: Indole-3-glycerol phosphate synthase (278 aa).

Belongs to the TrpC family.

It carries out the reaction 1-(2-carboxyphenylamino)-1-deoxy-D-ribulose 5-phosphate + H(+) = (1S,2R)-1-C-(indol-3-yl)glycerol 3-phosphate + CO2 + H2O. Its pathway is amino-acid biosynthesis; L-tryptophan biosynthesis; L-tryptophan from chorismate: step 4/5. This chain is Indole-3-glycerol phosphate synthase, found in Pseudomonas paraeruginosa (strain DSM 24068 / PA7) (Pseudomonas aeruginosa (strain PA7)).